The chain runs to 294 residues: tRNA pseudouridine synthase A (294 aa).

Catalysis depends on D64, which acts as the Nucleophile. Substrate is bound at residue Y122.

The protein belongs to the tRNA pseudouridine synthase TruA family. In terms of assembly, homodimer.

It carries out the reaction uridine(38/39/40) in tRNA = pseudouridine(38/39/40) in tRNA. Functionally, formation of pseudouridine at positions 38, 39 and 40 in the anticodon stem and loop of transfer RNAs. The polypeptide is tRNA pseudouridine synthase A (Synechococcus sp. (strain ATCC 27144 / PCC 6301 / SAUG 1402/1) (Anacystis nidulans)).